Reading from the N-terminus, the 132-residue chain is Global transcriptional regulator Spx (132 aa).

A disulfide bond links Cys10 and Cys13.

Belongs to the ArsC family. Spx subfamily. In terms of assembly, interacts with the C-terminal domain of the alpha subunit of the RNAP.

It is found in the cytoplasm. Global transcriptional regulator that plays a key role in stress response and exerts either positive or negative regulation of genes. Acts by interacting with the C-terminal domain of the alpha subunit of the RNA polymerase (RNAP). This interaction can enhance binding of RNAP to the promoter region of target genes and stimulate their transcription, or block interaction of RNAP with activator. The sequence is that of Global transcriptional regulator Spx from Enterococcus faecalis (strain ATCC 700802 / V583).